A 152-amino-acid polypeptide reads, in one-letter code: 6,7-dimethyl-8-ribityllumazine synthase (152 aa).

Residues phenylalanine 21, 55 to 57 (AFE), and 79 to 81 (AVI) contribute to the 5-amino-6-(D-ribitylamino)uracil site. Residue 84-85 (AT) coordinates (2S)-2-hydroxy-3-oxobutyl phosphate. Histidine 87 functions as the Proton donor in the catalytic mechanism. Position 112 (phenylalanine 112) interacts with 5-amino-6-(D-ribitylamino)uracil. Arginine 126 serves as a coordination point for (2S)-2-hydroxy-3-oxobutyl phosphate.

Belongs to the DMRL synthase family. As to quaternary structure, forms an icosahedral capsid composed of 60 subunits, arranged as a dodecamer of pentamers.

The enzyme catalyses (2S)-2-hydroxy-3-oxobutyl phosphate + 5-amino-6-(D-ribitylamino)uracil = 6,7-dimethyl-8-(1-D-ribityl)lumazine + phosphate + 2 H2O + H(+). Its pathway is cofactor biosynthesis; riboflavin biosynthesis; riboflavin from 2-hydroxy-3-oxobutyl phosphate and 5-amino-6-(D-ribitylamino)uracil: step 1/2. In terms of biological role, catalyzes the formation of 6,7-dimethyl-8-ribityllumazine by condensation of 5-amino-6-(D-ribitylamino)uracil with 3,4-dihydroxy-2-butanone 4-phosphate. This is the penultimate step in the biosynthesis of riboflavin. The protein is 6,7-dimethyl-8-ribityllumazine synthase of Exiguobacterium sibiricum (strain DSM 17290 / CCUG 55495 / CIP 109462 / JCM 13490 / 255-15).